The chain runs to 81 residues: Cytochrome b559 subunit alpha (81 aa).

The chain crosses the membrane as a helical span at residues Ile-21–Trp-35. His-23 is a heme binding site.

It belongs to the PsbE/PsbF family. As to quaternary structure, heterodimer of an alpha subunit and a beta subunit. PSII is composed of 1 copy each of membrane proteins PsbA, PsbB, PsbC, PsbD, PsbE, PsbF, PsbH, PsbI, PsbJ, PsbK, PsbL, PsbM, PsbT, PsbX, PsbY, PsbZ, Psb30/Ycf12, peripheral proteins PsbO, CyanoQ (PsbQ), PsbU, PsbV and a large number of cofactors. It forms dimeric complexes. It depends on heme b as a cofactor.

Its subcellular location is the cellular thylakoid membrane. This b-type cytochrome is tightly associated with the reaction center of photosystem II (PSII). PSII is a light-driven water:plastoquinone oxidoreductase that uses light energy to abstract electrons from H(2)O, generating O(2) and a proton gradient subsequently used for ATP formation. It consists of a core antenna complex that captures photons, and an electron transfer chain that converts photonic excitation into a charge separation. The protein is Cytochrome b559 subunit alpha of Microcystis aeruginosa (strain NIES-843 / IAM M-2473).